The primary structure comprises 273 residues: Coiled-coil domain-containing protein 3 (273 aa).

The first 21 residues, 1 to 21 (MPLPLLLAALCLAASPAPARA), serve as a signal peptide directing secretion. The N-linked (GlcNAc...) asparagine glycan is linked to N100. The stretch at 188 to 250 (SVQKALFEEE…VNQKLNEKLG (63 aa)) forms a coiled coil.

As to quaternary structure, homodimer. N-glycosylated. Expressed in aorta and adipose tissue. Enriched in mature adipocytes. Over-expressed in adipose tissue from either hormonally-induced or nutritionally-regulated obese mice models.

Its subcellular location is the secreted. In terms of biological role, negatively regulates TNF-alpha-induced pro-inflammatory response in endothelial cells (ECs) via inhibition of TNF-alpha-induced NF-kappaB activation in ECs. Positively regulates lipid accumulation in adipose cells. In Mus musculus (Mouse), this protein is Coiled-coil domain-containing protein 3 (Ccdc3).